The primary structure comprises 264 residues: uncharacterized protein (264 aa).

A helical transmembrane segment spans residues 9–29 (LVISILSLIATLSISFNIYFI).

Its subcellular location is the membrane. This is an uncharacterized protein from Ureaplasma parvum serovar 3 (strain ATCC 700970).